The chain runs to 223 residues: Phosphoribosylformylglycinamidine synthase subunit PurQ (223 aa).

The Glutamine amidotransferase type-1 domain occupies 3–223 (SAVVQLPGLN…FASALDVIAA (221 aa)). The active-site Nucleophile is C86. Active-site residues include H196 and E198.

Part of the FGAM synthase complex composed of 1 PurL, 1 PurQ and 2 PurS subunits.

The protein localises to the cytoplasm. It carries out the reaction N(2)-formyl-N(1)-(5-phospho-beta-D-ribosyl)glycinamide + L-glutamine + ATP + H2O = 2-formamido-N(1)-(5-O-phospho-beta-D-ribosyl)acetamidine + L-glutamate + ADP + phosphate + H(+). The catalysed reaction is L-glutamine + H2O = L-glutamate + NH4(+). Its pathway is purine metabolism; IMP biosynthesis via de novo pathway; 5-amino-1-(5-phospho-D-ribosyl)imidazole from N(2)-formyl-N(1)-(5-phospho-D-ribosyl)glycinamide: step 1/2. Part of the phosphoribosylformylglycinamidine synthase complex involved in the purines biosynthetic pathway. Catalyzes the ATP-dependent conversion of formylglycinamide ribonucleotide (FGAR) and glutamine to yield formylglycinamidine ribonucleotide (FGAM) and glutamate. The FGAM synthase complex is composed of three subunits. PurQ produces an ammonia molecule by converting glutamine to glutamate. PurL transfers the ammonia molecule to FGAR to form FGAM in an ATP-dependent manner. PurS interacts with PurQ and PurL and is thought to assist in the transfer of the ammonia molecule from PurQ to PurL. The sequence is that of Phosphoribosylformylglycinamidine synthase subunit PurQ from Rhizobium johnstonii (strain DSM 114642 / LMG 32736 / 3841) (Rhizobium leguminosarum bv. viciae).